We begin with the raw amino-acid sequence, 219 residues long: Guanylate kinase (219 aa).

In terms of domain architecture, Guanylate kinase-like spans 15 to 194 (GLMFVLSSPS…AFAEVHSILK (180 aa)). 22–29 (SPSGAGKT) lines the ATP pocket.

This sequence belongs to the guanylate kinase family.

The protein resides in the cytoplasm. The enzyme catalyses GMP + ATP = GDP + ADP. Functionally, essential for recycling GMP and indirectly, cGMP. This is Guanylate kinase from Rhodopseudomonas palustris (strain BisB18).